The following is a 430-amino-acid chain: Enolase (430 aa).

Gln-165 is a (2R)-2-phosphoglycerate binding site. Residue Glu-207 is the Proton donor of the active site. Mg(2+) contacts are provided by Asp-244, Glu-287, and Asp-314. Lys-339, Arg-368, Ser-369, and Lys-390 together coordinate (2R)-2-phosphoglycerate. Lys-339 serves as the catalytic Proton acceptor.

This sequence belongs to the enolase family. In terms of assembly, component of the RNA degradosome, a multiprotein complex involved in RNA processing and mRNA degradation. Mg(2+) serves as cofactor.

Its subcellular location is the cytoplasm. The protein localises to the secreted. It localises to the cell surface. The enzyme catalyses (2R)-2-phosphoglycerate = phosphoenolpyruvate + H2O. Its pathway is carbohydrate degradation; glycolysis; pyruvate from D-glyceraldehyde 3-phosphate: step 4/5. Its function is as follows. Catalyzes the reversible conversion of 2-phosphoglycerate (2-PG) into phosphoenolpyruvate (PEP). It is essential for the degradation of carbohydrates via glycolysis. The chain is Enolase from Xylella fastidiosa (strain M23).